The sequence spans 77 residues: uncharacterized protein (77 aa).

The protein resides in the plastid. It localises to the cyanelle. This is an uncharacterized protein from Cyanophora paradoxa.